The following is a 55-amino-acid chain: Rubredoxin-2 (55 aa).

In terms of domain architecture, Rubredoxin-like spans 1–54; sequence MRKWQCVVCGFIYDEALGLPEEGIPAGTRWEDIPADWVCPDCGVGKIDFEMIEI. Residues C6, C9, C39, and C42 each contribute to the Fe cation site.

The protein belongs to the rubredoxin family. The cofactor is Fe(3+).

Its subcellular location is the cytoplasm. The protein operates within hydrocarbon metabolism; alkane degradation. Involved in the hydrocarbon hydroxylating system, which transfers electrons from NADH to rubredoxin reductase and then through rubredoxin to alkane 1 monooxygenase. The polypeptide is Rubredoxin-2 (rubA2) (Pseudomonas aeruginosa (strain ATCC 15692 / DSM 22644 / CIP 104116 / JCM 14847 / LMG 12228 / 1C / PRS 101 / PAO1)).